Reading from the N-terminus, the 348-residue chain is Acetylesterase (348 aa).

An N-terminal signal peptide occupies residues 1 to 16 (MRSILVIPSFVAVLNA). 5 N-linked (GlcNAc...) asparagine glycosylation sites follow: Asn-64, Asn-165, Asn-218, Asn-223, and Asn-297.

Belongs to the carbohydrate esterase CE16 family. N-glycosylated.

It is found in the secreted. The catalysed reaction is an acetyl ester + H2O = an aliphatic alcohol + acetate + H(+). Its function is as follows. Acetylesterase that acts as an exo-deacetylase. Shows activity towards naphtyl acetate, triacetin, as well as towards glucose- and xylose acetates. Liberates acetic acid from xylo-oligomers. The protein is Acetylesterase of Hypocrea jecorina (Trichoderma reesei).